The sequence spans 221 residues: uncharacterized protein (221 aa).

Residues 1 to 30 (MVPPNPAHQPARRTQPQLQPQSQPRAQPLP) are disordered. A compositionally biased stretch (polar residues) spans 12–25 (RRTQPQLQPQSQPR). A helical membrane pass occupies residues 37–57 (VLCIIVALVLLGLLVGLAILI).

The protein resides in the membrane. This is an uncharacterized protein from Arabidopsis thaliana (Mouse-ear cress).